A 573-amino-acid chain; its full sequence is Myrcene synthase TPS5FN (573 aa).

Positions 286, 323, 327, 464, and 467 each coordinate (2E)-geranyl diphosphate. Residues Asp-323 and Asp-327 each coordinate Mg(2+). A DDXXD motif motif is present at residues 323–327 (DDIFD). The Mg(2+) site is built by Asp-467, Thr-471, and Glu-475.

This sequence belongs to the terpene synthase family. Tpsb subfamily. The cofactor is Mg(2+). Mn(2+) is required as a cofactor. As to expression, expressed in glandular trichomes two to four weeks after flowering onset.

The enzyme catalyses (2E)-geranyl diphosphate = beta-myrcene + diphosphate. The catalysed reaction is (2E)-geranyl diphosphate = (1R,5R)-alpha-pinene + diphosphate. It carries out the reaction (2E)-geranyl diphosphate = sabinene + diphosphate. It catalyses the reaction (2E)-geranyl diphosphate = (4S)-limonene + diphosphate. The enzyme catalyses (2E)-geranyl diphosphate = terpinolene + diphosphate. The catalysed reaction is (2E)-geranyl diphosphate = camphene + diphosphate. It participates in secondary metabolite biosynthesis; terpenoid biosynthesis. Functionally, involved in monoterpene (C10) olefins biosynthesis, constituants of cannabinoids and terpenoids-rich resins. Catalyzes mainly the conversion of (2E)-geranyl diphosphate to beta-myrcene, and also produces minor products such as alpha-pinene, camphene, sabinene, limonene and terpinolene. The chain is Myrcene synthase TPS5FN from Cannabis sativa (Hemp).